The sequence spans 485 residues: Peptidyl-prolyl cis-trans isomerase-like 4 (485 aa).

Residues 1 to 172 (MSVLLETSAG…IDIRIKHTVI (172 aa)) form the PPIase cyclophilin-type domain. Residues 251–329 (NVLFVCKLNP…RRIHVDFSQS (79 aa)) form the RRM domain. Positions 377–485 (NYRMVYGEEE…RDENDRRSRR (109 aa)) are disordered. Basic and acidic residues predominate over residues 426–485 (RPRDRSRDRYHKPRDDRRGDRRDRDRRDQDRNRYRDRDHRDRGREKDRYGRDENDRRSRR).

It belongs to the cyclophilin-type PPIase family. PPIL4 subfamily.

The protein resides in the nucleus. It catalyses the reaction [protein]-peptidylproline (omega=180) = [protein]-peptidylproline (omega=0). Its function is as follows. PPIases accelerate the folding of proteins. It catalyzes the cis-trans isomerization of proline imidic peptide bonds in oligopeptides. This is Peptidyl-prolyl cis-trans isomerase-like 4 (CYP6) from Gibberella zeae (strain ATCC MYA-4620 / CBS 123657 / FGSC 9075 / NRRL 31084 / PH-1) (Wheat head blight fungus).